The sequence spans 546 residues: CTP synthase (546 aa).

Positions Met1 to Leu266 are amidoligase domain. Residue Ser13 coordinates CTP. Ser13 lines the UTP pocket. Ser14–Ile19 serves as a coordination point for ATP. Position 54 (Tyr54) interacts with L-glutamine. Asp71 contacts ATP. Residues Asp71 and Glu141 each contribute to the Mg(2+) site. CTP-binding positions include Asp148–Glu150, Lys187–Gln192, and Lys223. Residues Lys187–Gln192 and Lys223 each bind UTP. The region spanning Pro291 to Ala533 is the Glutamine amidotransferase type-1 domain. Gly353 is a binding site for L-glutamine. Cys380 functions as the Nucleophile; for glutamine hydrolysis in the catalytic mechanism. L-glutamine-binding positions include Leu381–Gln384, Glu404, and Arg461. Catalysis depends on residues His506 and Glu508.

The protein belongs to the CTP synthase family. Homotetramer.

The enzyme catalyses UTP + L-glutamine + ATP + H2O = CTP + L-glutamate + ADP + phosphate + 2 H(+). It catalyses the reaction L-glutamine + H2O = L-glutamate + NH4(+). It carries out the reaction UTP + NH4(+) + ATP = CTP + ADP + phosphate + 2 H(+). It participates in pyrimidine metabolism; CTP biosynthesis via de novo pathway; CTP from UDP: step 2/2. With respect to regulation, allosterically activated by GTP, when glutamine is the substrate; GTP has no effect on the reaction when ammonia is the substrate. The allosteric effector GTP functions by stabilizing the protein conformation that binds the tetrahedral intermediate(s) formed during glutamine hydrolysis. Inhibited by the product CTP, via allosteric rather than competitive inhibition. In terms of biological role, catalyzes the ATP-dependent amination of UTP to CTP with either L-glutamine or ammonia as the source of nitrogen. Regulates intracellular CTP levels through interactions with the four ribonucleotide triphosphates. This chain is CTP synthase, found in Chloroflexus aurantiacus (strain ATCC 29366 / DSM 635 / J-10-fl).